The sequence spans 652 residues: Pesticidal crystal protein Cry3Bb (652 aa).

The segment covering 1–12 (MNPNNRSEHDTI) has biased composition (basic and acidic residues). 2 disordered regions span residues 1–33 (MNPN…ADNP) and 433–465 (KNET…ETTD). A compositionally biased stretch (polar residues) spans 14–33 (VTPNSELQTNHNQYPLADNP).

The protein belongs to the delta endotoxin family. Monomer.

Functionally, promotes colloidosmotic lysis by binding to the midgut epithelial cells of Coleoptera. Has moderate level of toxicity to southern corn rootworm. The protein is Pesticidal crystal protein Cry3Bb (cry3Bb) of Bacillus thuringiensis.